A 75-amino-acid polypeptide reads, in one-letter code: MSQYSQNQYAGAYPTPPVSTGPYVAPPPLGYPTNDTTHATVAPVETKSKGEAADGFLKGCLATMLACCVLDACIF.

The tract at residues 1 to 29 (MSQYSQNQYAGAYPTPPVSTGPYVAPPPL) is disordered. Over residues 14-29 (PTPPVSTGPYVAPPPL) the composition is skewed to pro residues. A helical membrane pass occupies residues 52–69 (AADGFLKGCLATMLACCV).

The protein belongs to the CYSTM1 family. As to quaternary structure, heterodimers. Interacts with CYSTM7 and WIH1/CYSTM13. Mostly expressed in roots, stems, rosette leaves and siliques and, to a lower extent, in flowers and cauline leaves.

It localises to the cell membrane. The protein localises to the nucleus. In terms of biological role, involved in resistance to abiotic stress. In Arabidopsis thaliana (Mouse-ear cress), this protein is Protein CYSTEINE-RICH TRANSMEMBRANE MODULE 5.